Reading from the N-terminus, the 472-residue chain is Glycerol-3-phosphate acyltransferase, chloroplastic (472 aa).

The transit peptide at 1–102 directs the protein to the chloroplast; the sequence is MLVLSSSAPP…EIPVKKEDDN (102 aa). The HXXXXD motif motif lies at 241–246; that stretch reads HQSEAD.

Belongs to the GPAT/DAPAT family.

The protein resides in the plastid. Its subcellular location is the chloroplast stroma. It catalyses the reaction sn-glycerol 3-phosphate + an acyl-CoA = a 1-acyl-sn-glycero-3-phosphate + CoA. The protein operates within phospholipid metabolism; CDP-diacylglycerol biosynthesis; CDP-diacylglycerol from sn-glycerol 3-phosphate: step 1/3. Esterifies acyl-group from acyl-ACP to the sn-1 position of glycerol-3-phosphate. The enzyme from chilling-resistant plants discriminates against non-fluid palmitic acid and selects oleic acid whereas the enzyme from sensitive plants accepts both fatty acids. This is an oleate-selective acyltransferase. The sequence is that of Glycerol-3-phosphate acyltransferase, chloroplastic (GAT) from Spinacia oleracea (Spinach).